The primary structure comprises 101 residues: NAD(P)H-quinone oxidoreductase subunit 4L, chloroplastic (101 aa).

3 helical membrane passes run Met2 to Ile22, Ile32 to Phe52, and Ile61 to Leu81.

This sequence belongs to the complex I subunit 4L family. In terms of assembly, NDH is composed of at least 16 different subunits, 5 of which are encoded in the nucleus.

The protein resides in the plastid. The protein localises to the chloroplast thylakoid membrane. The catalysed reaction is a plastoquinone + NADH + (n+1) H(+)(in) = a plastoquinol + NAD(+) + n H(+)(out). The enzyme catalyses a plastoquinone + NADPH + (n+1) H(+)(in) = a plastoquinol + NADP(+) + n H(+)(out). In terms of biological role, NDH shuttles electrons from NAD(P)H:plastoquinone, via FMN and iron-sulfur (Fe-S) centers, to quinones in the photosynthetic chain and possibly in a chloroplast respiratory chain. The immediate electron acceptor for the enzyme in this species is believed to be plastoquinone. Couples the redox reaction to proton translocation, and thus conserves the redox energy in a proton gradient. This is NAD(P)H-quinone oxidoreductase subunit 4L, chloroplastic from Zea mays (Maize).